The sequence spans 457 residues: D(1B) dopamine receptor (457 aa).

The Extracellular segment spans residues 1–41 (MYQPFQHLDSDQVASWQSPEMLMNKSVSRESQRRKELVAGQ). The N-linked (GlcNAc...) asparagine glycan is linked to Asn-24. A helical transmembrane segment spans residues 42–67 (IVTGSLLLLLIFWTLFGNILVCTAVM). Residues 68 to 78 (RFRHLRSRVTN) lie on the Cytoplasmic side of the membrane. Residues 79–105 (IFIVSLAVSDLLVALLVMPWKAVAEVA) form a helical membrane-spanning segment. At 106–114 (GHWPFGAFC) the chain is on the extracellular side. An intrachain disulfide couples Cys-114 to Cys-199. A helical transmembrane segment spans residues 115 to 137 (DIWVAFDIMCSTASILNLCVISV). Residues 138-156 (DRYWAISSPFRYERKMTQR) are Cytoplasmic-facing. A helical membrane pass occupies residues 157–181 (VALLMISTAWALSVLISFIPVQLSW). Over 182-205 (HKSETEDHLLSNHSTGNCDSSLNR) the chain is Extracellular. Residues 206–231 (TYAISSSLISFYIPVAIMIVTYTRIY) traverse the membrane as a helical segment. Residues 232–282 (RIAQIQIKRISTLERAAEHAQSCRSNRVDSCSRHHQTSLRTSIKKETKVLK) lie on the Cytoplasmic side of the membrane. The helical transmembrane segment at 283-309 (TLSIIMGVFVCCWLPFFILNCMVPFCD) threads the bilayer. Topologically, residues 310–326 (RSPGHPQAGLPCVSETT) are extracellular. The chain crosses the membrane as a helical span at residues 327–351 (FDIFVWFGWANSSLNPIIYAFNADF). Over 352–457 (RKVFSSLLGC…ITPSMSNGIH (106 aa)) the chain is Cytoplasmic. The S-palmitoyl cysteine moiety is linked to residue Cys-361.

This sequence belongs to the G-protein coupled receptor 1 family. As to expression, brain and kidney.

The protein localises to the cell membrane. Dopamine receptor whose activity is mediated by G proteins which activate adenylyl cyclase. This chain is D(1B) dopamine receptor (drd5), found in Xenopus laevis (African clawed frog).